A 706-amino-acid polypeptide reads, in one-letter code: Probable cyclic nucleotide-gated ion channel 3 (706 aa).

The Cytoplasmic portion of the chain corresponds to 1-85 (MMNPQRNKFV…NDSYLQSWNK (85 aa)). The chain crosses the membrane as a helical span at residues 86–106 (IFLLLSVVALAFDPLFFYIPY). The Extracellular portion of the chain corresponds to 107–119 (VKPERFCLNLDKK). Residues 120–140 (LQTIACVFRTFIDAFYVVHML) traverse the membrane as a helical segment. At 141–174 (FQFHTGFITPSSSGFGRGELNEKHKDIALRYLGS) the chain is on the cytoplasmic side. Residues 175–195 (YFLIDLLSILPIPQVVVLAIV) form a helical membrane-spanning segment. Residues 196 to 208 (PRMRRPASLVAKE) lie on the Extracellular side of the membrane. A helical membrane pass occupies residues 209 to 229 (LLKWVIFCQYVPRIARIYPLF). Over 230–247 (KEVTRTSGLVTETAWAGA) the chain is Cytoplasmic. A helical transmembrane segment spans residues 248-268 (ALNLFLYMLASHVFGSFWYLI). Topologically, residues 269–371 (SIERKDRCWR…QNLKTSAFEG (103 aa)) are extracellular. A helical transmembrane segment spans residues 372–392 (EIIFAIVICISGLVLFALLIG). The Cytoplasmic portion of the chain corresponds to 393-706 (NMQKYLQSTT…ADPEFPMDET (314 aa)). Residues 477 to 600 (WFQA…KQLR) and Asp-548 each bind a nucleoside 3',5'-cyclic phosphate. Positions 591 to 606 (YRRLHSKQLRHMFRFY) are calmodulin-binding. Residues 611-640 (QTWAACFIQAAWKRHCRRKLSKALREEEGK) form the IQ domain.

The protein belongs to the cyclic nucleotide-gated cation channel (TC 1.A.1.5) family. As to quaternary structure, homotetramer or heterotetramer.

The protein resides in the cell membrane. Its function is as follows. Probable cyclic nucleotide-gated ion channel. The polypeptide is Probable cyclic nucleotide-gated ion channel 3 (CNGC3) (Arabidopsis thaliana (Mouse-ear cress)).